We begin with the raw amino-acid sequence, 78 residues long: DNA-directed RNA polymerase subunit omega (78 aa).

It belongs to the RNA polymerase subunit omega family. In cyanobacteria the RNAP catalytic core is composed of 2 alpha, 1 beta, 1 beta', 1 gamma and 1 omega subunit. When a sigma factor is associated with the core the holoenzyme is formed, which can initiate transcription.

It carries out the reaction RNA(n) + a ribonucleoside 5'-triphosphate = RNA(n+1) + diphosphate. Functionally, promotes RNA polymerase assembly. Latches the N- and C-terminal regions of the beta' subunit thereby facilitating its interaction with the beta and alpha subunits. The protein is DNA-directed RNA polymerase subunit omega of Prochlorococcus marinus subsp. pastoris (strain CCMP1986 / NIES-2087 / MED4).